A 222-amino-acid chain; its full sequence is tRNA (guanine-N(1)-)-methyltransferase (222 aa).

Residues glycine 110 and 130 to 135 (IGDYVL) contribute to the S-adenosyl-L-methionine site.

It belongs to the RNA methyltransferase TrmD family. Homodimer.

Its subcellular location is the cytoplasm. It carries out the reaction guanosine(37) in tRNA + S-adenosyl-L-methionine = N(1)-methylguanosine(37) in tRNA + S-adenosyl-L-homocysteine + H(+). In terms of biological role, specifically methylates guanosine-37 in various tRNAs. In Protochlamydia amoebophila (strain UWE25), this protein is tRNA (guanine-N(1)-)-methyltransferase.